Here is an 82-residue protein sequence, read N- to C-terminus: Splicing factor U2AF 35 kDa subunit (82 aa).

The residue at position 2 (Ala2) is an N-acetylalanine. The C3H1-type zinc finger occupies 12 to 40 (EKDKVNCSFYFKIGACRHGDRCSRLHNKP). Lys39 is subject to N6-methyllysine. In terms of domain architecture, RRM spans 65 to 82 (SHCHVSDVEVQEHYDNFF).

It belongs to the splicing factor SR family. In terms of assembly, identified in the spliceosome C complex. Heterodimer with U2AF2. Interacts (via RS domain) with PHF5A (via N-terminus). Interacts with ZRANB2. Interacts with SDE2. Interacts with SF3B1.

The protein localises to the nucleus. It localises to the nucleus speckle. Plays a critical role in both constitutive and enhancer-dependent splicing by mediating protein-protein interactions and protein-RNA interactions required for accurate 3'-splice site selection. Recruits U2 snRNP to the branch point. Directly mediates interactions between U2AF2 and proteins bound to the enhancers and thus may function as a bridge between U2AF2 and the enhancer complex to recruit it to the adjacent intron. The chain is Splicing factor U2AF 35 kDa subunit (U2AF1) from Sus scrofa (Pig).